We begin with the raw amino-acid sequence, 572 residues long: FAD-linked oxidoreductase patO (572 aa).

The signal sequence occupies residues methionine 1–glycine 23. N-linked (GlcNAc...) asparagine glycans are attached at residues asparagine 48, asparagine 71, asparagine 126, asparagine 180, asparagine 309, asparagine 354, asparagine 381, asparagine 422, asparagine 446, and asparagine 481. One can recognise an FAD-binding PCMH-type domain in the interval cysteine 115–aspartate 295.

This sequence belongs to the oxygen-dependent FAD-linked oxidoreductase family. FAD is required as a cofactor.

The protein localises to the vacuole lumen. It participates in mycotoxin biosynthesis; patulin biosynthesis. FAD-linked oxidoreductase; part of the gene cluster that mediates the biosynthesis of patulin, an acetate-derived tetraketide mycotoxin produced by several fungal species that shows antimicrobial properties against several bacteria. PatO acts with patJ in the vacuole to convert gentisyl alcohol to isoepoxydon. The pathway begins with the synthesis of 6-methylsalicylic acid by the polyketide synthase (PKS) patK via condensation of acetate and malonate units. The 6-methylsalicylic acid decarboxylase patG then catalyzes the decarboxylation of 6-methylsalicylic acid to yield m-cresol (also known as 3-methylphenol). These first reactions occur in the cytosol. The intermediate m-cresol is then transported into the endoplasmic reticulum where the cytochrome P450 monooxygenase patH converts it to m-hydroxybenzyl alcohol, which is further converted to gentisyl alcohol by the cytochrome P450 monooxygenase patI. The oxidoreductases patJ and patO further convert gentisyl alcohol to isoepoxydon in the vacuole. PatN catalyzes then the transformation of isoepoxydon into phyllostine. The cluster protein patF is responsible for the conversion from phyllostine to neopatulin whereas the alcohol dehydrogenase patD converts neopatulin to E-ascladiol. The steps between isoepoxydon and E-ascladiol occur in the cytosol, and E-ascladiol is probably secreted to the extracellular space by one of the cluster-specific transporters patC or patM. Finally, the secreted patulin synthase patE catalyzes the conversion of E-ascladiol to patulin. The protein is FAD-linked oxidoreductase patO of Aspergillus clavatus (strain ATCC 1007 / CBS 513.65 / DSM 816 / NCTC 3887 / NRRL 1 / QM 1276 / 107).